Consider the following 255-residue polypeptide: Serine/threonine-protein phosphatase PP1 (255 aa).

The Mn(2+) site is built by D2, H4, D30, and N62. The active-site Proton donor is H63. Mn(2+) contacts are provided by H111 and H186.

It belongs to the PPP phosphatase family. PP-1 subfamily. Mn(2+) is required as a cofactor.

The enzyme catalyses O-phospho-L-seryl-[protein] + H2O = L-seryl-[protein] + phosphate. It catalyses the reaction O-phospho-L-threonyl-[protein] + H2O = L-threonyl-[protein] + phosphate. This Brassica napus (Rape) protein is Serine/threonine-protein phosphatase PP1.